The primary structure comprises 494 residues: Probable malate:quinone oxidoreductase (494 aa).

This sequence belongs to the MQO family. FAD is required as a cofactor.

The enzyme catalyses (S)-malate + a quinone = a quinol + oxaloacetate. It functions in the pathway carbohydrate metabolism; tricarboxylic acid cycle; oxaloacetate from (S)-malate (quinone route): step 1/1. The sequence is that of Probable malate:quinone oxidoreductase from Helicobacter hepaticus (strain ATCC 51449 / 3B1).